The primary structure comprises 114 residues: UPF0102 protein Shew_0226 (114 aa).

The protein belongs to the UPF0102 family.

This Shewanella loihica (strain ATCC BAA-1088 / PV-4) protein is UPF0102 protein Shew_0226.